Here is a 466-residue protein sequence, read N- to C-terminus: Teichoic acids export ATP-binding protein TagH (466 aa).

Residues 27–249 (NKAKSLIGSN…YEKFVQWFKK (223 aa)) enclose the ABC transporter domain. Position 63–70 (63–70 (GLNGAGKS)) interacts with ATP. A unknown region spans residues 250-466 (LPKKEQEKFK…TTEQSDGANQ (217 aa)). 2 disordered regions span residues 356 to 403 (NMTS…SNQN) and 439 to 466 (IHPGQEINLPEPTTSANSTTEQSDGANQ). The segment covering 373–384 (PKKKVSQAKKTT) has biased composition (basic residues). Positions 385–403 (KVSSTQKNTSSSSSTSNQN) are enriched in low complexity. A LysM domain is found at 403 to 447 (NTYIVQAGDSLSIIAENHGYSVEEIQQVNPGVDFSVIHPGQEINL). A compositionally biased stretch (polar residues) spans 449–466 (EPTTSANSTTEQSDGANQ).

Belongs to the ABC transporter superfamily. Teichoic acids exporter (TC 3.A.1.104.1) family. In terms of assembly, the complex is composed of two ATP-binding proteins (TagH) and two transmembrane proteins (TagG).

The protein resides in the cell membrane. The enzyme catalyses ATP + H2O + teichoic acidSide 1 = ADP + phosphate + teichoic acidSide 2.. Functionally, part of the ABC transporter complex TagGH involved in teichoic acids export. Responsible for energy coupling to the transport system. This chain is Teichoic acids export ATP-binding protein TagH, found in Lactococcus lactis subsp. lactis (strain IL1403) (Streptococcus lactis).